An 89-amino-acid chain; its full sequence is Small ribosomal subunit protein uS15 (89 aa).

This sequence belongs to the universal ribosomal protein uS15 family. As to quaternary structure, part of the 30S ribosomal subunit. Forms a bridge to the 50S subunit in the 70S ribosome, contacting the 23S rRNA.

In terms of biological role, one of the primary rRNA binding proteins, it binds directly to 16S rRNA where it helps nucleate assembly of the platform of the 30S subunit by binding and bridging several RNA helices of the 16S rRNA. Forms an intersubunit bridge (bridge B4) with the 23S rRNA of the 50S subunit in the ribosome. This chain is Small ribosomal subunit protein uS15, found in Sulfurovum sp. (strain NBC37-1).